Consider the following 750-residue polypeptide: Pesticidal crystal protein Cry11Bb (750 aa).

The tract at residues 672–750 is disordered; it reads QGYNDNYNQN…NYNQNTSSGV (79 aa).

This sequence belongs to the delta endotoxin family.

Promotes colloidosmotic lysis by binding to the midgut epithelial cells of mosquito larvae such as Aedes aegypti, Anopheles albimanus and Culex quinquefasciatus. The sequence is that of Pesticidal crystal protein Cry11Bb (cry11Bb) from Bacillus thuringiensis subsp. medellin.